Reading from the N-terminus, the 528-residue chain is Intestinal-type alkaline phosphatase (528 aa).

Positions Met-1–Gly-19 are cleaved as a signal peptide. Asp-61 contacts Mg(2+). Zn(2+)-binding residues include Asp-61 and Ser-111. Residue Ser-111 is the Phosphoserine intermediate of the active site. Cys-140 and Cys-202 are joined by a disulfide. A glycan (N-linked (GlcNAc...) asparagine) is linked at Asn-141. Mg(2+) is bound at residue Ser-174. Ca(2+) is bound at residue Glu-235. N-linked (GlcNAc...) asparagine glycosylation occurs at Asn-268. Ca(2+) is bound by residues Phe-288, Glu-289, and Asp-304. Glu-330 is a Mg(2+) binding site. Zn(2+) is bound by residues Asp-335, His-339, Asp-376, and His-377. Asn-429 carries an N-linked (GlcNAc...) asparagine glycan. His-451 contacts Zn(2+). Residues Cys-486 and Cys-493 are joined by a disulfide bond. Residue Asp-503 is the site of GPI-anchor amidated aspartate attachment. Residues Ala-504–Pro-528 constitute a propeptide, removed in mature form.

The protein belongs to the alkaline phosphatase family. Homodimer. Mg(2+) serves as cofactor. Zn(2+) is required as a cofactor. The cofactor is Ca(2+).

Its subcellular location is the cell membrane. The catalysed reaction is a phosphate monoester + H2O = an alcohol + phosphate. Alkaline phosphatase that can hydrolyze various phosphate compounds. This is Intestinal-type alkaline phosphatase (ALPI) from Homo sapiens (Human).